The chain runs to 234 residues: Ubiquinone biosynthesis O-methyltransferase (234 aa).

S-adenosyl-L-methionine is bound by residues R36, G56, D77, and M125.

This sequence belongs to the methyltransferase superfamily. UbiG/COQ3 family.

The catalysed reaction is a 3-demethylubiquinol + S-adenosyl-L-methionine = a ubiquinol + S-adenosyl-L-homocysteine + H(+). The enzyme catalyses a 3-(all-trans-polyprenyl)benzene-1,2-diol + S-adenosyl-L-methionine = a 2-methoxy-6-(all-trans-polyprenyl)phenol + S-adenosyl-L-homocysteine + H(+). It functions in the pathway cofactor biosynthesis; ubiquinone biosynthesis. Functionally, O-methyltransferase that catalyzes the 2 O-methylation steps in the ubiquinone biosynthetic pathway. The protein is Ubiquinone biosynthesis O-methyltransferase of Actinobacillus pleuropneumoniae serotype 7 (strain AP76).